We begin with the raw amino-acid sequence, 373 residues long: Alcohol dehydrogenase class-3 (373 aa).

A1 carries the N-acetylalanine modification. C44, H66, C96, C99, C102, C110, and C173 together coordinate Zn(2+).

It belongs to the zinc-containing alcohol dehydrogenase family. Class-III subfamily. In terms of assembly, homodimer. Requires Zn(2+) as cofactor.

It localises to the cytoplasm. It carries out the reaction a primary alcohol + NAD(+) = an aldehyde + NADH + H(+). The catalysed reaction is a secondary alcohol + NAD(+) = a ketone + NADH + H(+). It catalyses the reaction S-(hydroxymethyl)glutathione + NADP(+) = S-formylglutathione + NADPH + H(+). The enzyme catalyses S-(hydroxymethyl)glutathione + NAD(+) = S-formylglutathione + NADH + H(+). It carries out the reaction S-nitrosoglutathione + NADH + H(+) = S-(hydroxysulfenamide)glutathione + NAD(+). Functionally, class-III ADH is remarkably ineffective in oxidizing ethanol, but it readily catalyzes the oxidation of long-chain primary alcohols and the oxidation of S-(hydroxymethyl) glutathione. Also acts as a S-nitroso-glutathione reductase by catalyzing the NADH-dependent reduction of S-nitrosoglutathione, thereby regulating protein S-nitrosylation. The sequence is that of Alcohol dehydrogenase class-3 from Saara hardwickii (Indian spiny-tailed lizard).